The sequence spans 687 residues: Probable ATP-dependent RNA helicase Dbp73D (687 aa).

2 disordered regions span residues 1–26 and 52–87; these read MELF…TNNE and TPIL…EEDV. Composition is skewed to basic and acidic residues over residues 9-18 and 54-79; these read YTEDLKEQKD and ILEK…EKPL. Positions 160-168 match the Q motif motif; the sequence is LFPVQKQVI. Residues 177–381 form the Helicase ATP-binding domain; sequence KPPPFRPRDI…DLRLFQPRLF (205 aa). 190-197 is a binding site for ATP; sequence APTGSGKT. Positions 305–308 match the DEAD box motif; that stretch reads DEAD. The region spanning 434 to 583 is the Helicase C-terminal domain; sequence TVFALVEKYK…EIHVSPDIEI (150 aa). Residues 646-675 form a disordered region; the sequence is IVQSSKKSSETKNSKTKADKTKYQPKETKK. Basic and acidic residues predominate over residues 652–675; the sequence is KSSETKNSKTKADKTKYQPKETKK.

Belongs to the DEAD box helicase family. DDX51/DBP6 subfamily. Expressed in the germline tissue of the ovary.

The protein resides in the nucleus. The protein localises to the nucleolus. It catalyses the reaction ATP + H2O = ADP + phosphate + H(+). In terms of biological role, ATP-binding RNA helicase involved in the biogenesis of 60S ribosomal subunits. This chain is Probable ATP-dependent RNA helicase Dbp73D (Dbp73D), found in Drosophila melanogaster (Fruit fly).